A 327-amino-acid polypeptide reads, in one-letter code: DNA-directed RNA polymerase subunit alpha (327 aa).

An alpha N-terminal domain (alpha-NTD) region spans residues 1–231 (MIYQMQMPAK…DHVLLFADFS (231 aa)). The alpha C-terminal domain (alpha-CTD) stretch occupies residues 247–327 (DEFETMRRLL…GMDITRYQMK (81 aa)).

This sequence belongs to the RNA polymerase alpha chain family. As to quaternary structure, homodimer. The RNAP catalytic core consists of 2 alpha, 1 beta, 1 beta' and 1 omega subunit. When a sigma factor is associated with the core the holoenzyme is formed, which can initiate transcription.

It carries out the reaction RNA(n) + a ribonucleoside 5'-triphosphate = RNA(n+1) + diphosphate. Functionally, DNA-dependent RNA polymerase catalyzes the transcription of DNA into RNA using the four ribonucleoside triphosphates as substrates. This chain is DNA-directed RNA polymerase subunit alpha, found in Chlorobium chlorochromatii (strain CaD3).